The chain runs to 222 residues: Uridine kinase (222 aa).

13–20 (GGSGAGKT) provides a ligand contact to ATP.

This sequence belongs to the uridine kinase family.

It localises to the cytoplasm. It catalyses the reaction uridine + ATP = UMP + ADP + H(+). It carries out the reaction cytidine + ATP = CMP + ADP + H(+). Its pathway is pyrimidine metabolism; CTP biosynthesis via salvage pathway; CTP from cytidine: step 1/3. It functions in the pathway pyrimidine metabolism; UMP biosynthesis via salvage pathway; UMP from uridine: step 1/1. In Chlamydia pneumoniae (Chlamydophila pneumoniae), this protein is Uridine kinase.